The following is a 260-amino-acid chain: Small ribosomal subunit protein uS2 (260 aa).

The interval glutamate 223–glutamate 260 is disordered. Residues valine 241–glutamate 254 show a composition bias toward basic and acidic residues.

The protein belongs to the universal ribosomal protein uS2 family.

The chain is Small ribosomal subunit protein uS2 from Pediococcus pentosaceus (strain ATCC 25745 / CCUG 21536 / LMG 10740 / 183-1w).